A 314-amino-acid polypeptide reads, in one-letter code: DNA-directed RNA polymerase subunit alpha (314 aa).

Residues 1 to 228 (MIEIEKPKIE…EHLSIFVNLT (228 aa)) are alpha N-terminal domain (alpha-NTD). Residues 245-314 (KEKVLEMTIE…DLGLSLRNEN (70 aa)) are alpha C-terminal domain (alpha-CTD).

The protein belongs to the RNA polymerase alpha chain family. In terms of assembly, homodimer. The RNAP catalytic core consists of 2 alpha, 1 beta, 1 beta' and 1 omega subunit. When a sigma factor is associated with the core the holoenzyme is formed, which can initiate transcription.

It catalyses the reaction RNA(n) + a ribonucleoside 5'-triphosphate = RNA(n+1) + diphosphate. Its function is as follows. DNA-dependent RNA polymerase catalyzes the transcription of DNA into RNA using the four ribonucleoside triphosphates as substrates. In Listeria innocua serovar 6a (strain ATCC BAA-680 / CLIP 11262), this protein is DNA-directed RNA polymerase subunit alpha.